A 113-amino-acid polypeptide reads, in one-letter code: Large ribosomal subunit protein bL19 (113 aa).

Belongs to the bacterial ribosomal protein bL19 family.

Functionally, this protein is located at the 30S-50S ribosomal subunit interface and may play a role in the structure and function of the aminoacyl-tRNA binding site. The protein is Large ribosomal subunit protein bL19 of Corynebacterium efficiens (strain DSM 44549 / YS-314 / AJ 12310 / JCM 11189 / NBRC 100395).